The sequence spans 89 residues: Small ribosomal subunit protein uS15 (89 aa).

The protein belongs to the universal ribosomal protein uS15 family. As to quaternary structure, part of the 30S ribosomal subunit. Forms a bridge to the 50S subunit in the 70S ribosome, contacting the 23S rRNA.

In terms of biological role, one of the primary rRNA binding proteins, it binds directly to 16S rRNA where it helps nucleate assembly of the platform of the 30S subunit by binding and bridging several RNA helices of the 16S rRNA. Forms an intersubunit bridge (bridge B4) with the 23S rRNA of the 50S subunit in the ribosome. The polypeptide is Small ribosomal subunit protein uS15 (Paracoccus denitrificans (strain Pd 1222)).